The primary structure comprises 763 residues: Translation initiation factor IF-2, chloroplastic (763 aa).

3 disordered regions span residues M1 to S22, I52 to A122, and N149 to I168. The segment covering S13–S22 has biased composition (low complexity). The segment covering R73–K92 has biased composition (basic and acidic residues). The span at N93 to K104 shows a compositional bias: basic residues. Residues K151–I168 are compositionally biased toward polar residues. Positions N261–L429 constitute a tr-type G domain. GTP-binding positions include G270–T277, D316–H320, and S370–D373.

The protein belongs to the TRAFAC class translation factor GTPase superfamily. Classic translation factor GTPase family. IF-2 subfamily.

It localises to the plastid. It is found in the chloroplast. Its function is as follows. One of the essential components for the initiation of protein synthesis. Protects formylmethionyl-tRNA from spontaneous hydrolysis and promotes its binding to the 30S ribosomal subunits. Also involved in the hydrolysis of GTP during the formation of the 70S ribosomal complex. The chain is Translation initiation factor IF-2, chloroplastic (infB) from Porphyra purpurea (Red seaweed).